A 623-amino-acid chain; its full sequence is Regulatory solute carrier protein family 1 member 1 (623 aa).

Polar residues-rich tracts occupy residues 1–16 (MSSLPTSDGFNHQAHP), 83–99 (CASSADNAPANQTPAIP), and 133–144 (EASLSVTTTRMQ). Disordered stretches follow at residues 1 to 48 (MSSL…PDSI), 71 to 99 (RKEQLPLQDPSDCASSADNAPANQTPAIP), 116 to 189 (SAEG…APHD), and 433 to 493 (EELT…PHCT). 3 stretches are compositionally biased toward basic and acidic residues: residues 150 to 159 (IGEKGWHPEY), 170 to 180 (QHEEPRNEQHE), and 460 to 473 (LVDKENVPRSRESV). The span at 474-491 (NESSLVTLDSAKTSNQPH) shows a compositional bias: polar residues. Residues 577–617 (IFPAADIDRILRAGFTLQEALGALHRVGGNADLALLVLLAK) form the UBA domain.

As to quaternary structure, interacts with YRDC. Renal outer cortex and outer medulla, small intestine and liver.

Its subcellular location is the cell membrane. It is found in the nucleus. The protein localises to the golgi apparatus. It localises to the trans-Golgi network. Its function is as follows. Mediates transcriptional and post-transcriptional regulation of SLC5A1. Inhibits a dynamin and PKC-dependent exocytotic pathway of SLC5A1. Also involved in transcriptional regulation of SLC22A2. Exhibits glucose-dependent, short-term inhibition of SLC5A1 and SLC22A2 by inhibiting the release of vesicles from the trans-Golgi network. In Sus scrofa (Pig), this protein is Regulatory solute carrier protein family 1 member 1 (RSC1A1).